The chain runs to 326 residues: Thiamine thiazole synthase (326 aa).

Residues Cys87, 108–109 (EA), Gly116, and Val181 each bind substrate. The residue at position 215 (Cys215) is a 2,3-didehydroalanine (Cys). Substrate contacts are provided by residues Asp217, His232, Met284, and 294–296 (RMG).

Belongs to the THI4 family. Homooctamer. Requires Fe cation as cofactor. Post-translationally, during the catalytic reaction, a sulfide is transferred from Cys-215 to a reaction intermediate, generating a dehydroalanine residue.

Its subcellular location is the cytoplasm. The protein localises to the nucleus. It catalyses the reaction [ADP-thiazole synthase]-L-cysteine + glycine + NAD(+) = [ADP-thiazole synthase]-dehydroalanine + ADP-5-ethyl-4-methylthiazole-2-carboxylate + nicotinamide + 3 H2O + 2 H(+). In terms of biological role, involved in biosynthesis of the thiamine precursor thiazole. Catalyzes the conversion of NAD and glycine to adenosine diphosphate 5-(2-hydroxyethyl)-4-methylthiazole-2-carboxylic acid (ADT), an adenylated thiazole intermediate. The reaction includes an iron-dependent sulfide transfer from a conserved cysteine residue of the protein to a thiazole intermediate. The enzyme can only undergo a single turnover, which suggests it is a suicide enzyme. May have additional roles in adaptation to various stress conditions and in DNA damage tolerance. This Sclerotinia sclerotiorum (strain ATCC 18683 / 1980 / Ss-1) (White mold) protein is Thiamine thiazole synthase.